The chain runs to 173 residues: Acetyl-CoA decarbonylase/synthase complex subunit epsilon (173 aa).

It belongs to the CdhB family. Heterotetramer of two alpha and two epsilon subunits. The ACDS complex is made up of alpha, epsilon, beta, gamma and delta subunits with a probable stoichiometry of (alpha(2)epsilon(2))(4)-beta(8)-(gamma(1)delta(1))(8).

It functions in the pathway one-carbon metabolism; methanogenesis from acetate. Part of a complex that catalyzes the reversible cleavage of acetyl-CoA, allowing growth on acetate as sole source of carbon and energy. The alpha-epsilon subcomponent functions as a carbon monoxide dehydrogenase. The precise role of the epsilon subunit is unclear; it may have a stabilizing role within the alpha(2)epsilon(2) component and/or be involved in electron transfer to FAD during a potential FAD-mediated CO oxidation. The chain is Acetyl-CoA decarbonylase/synthase complex subunit epsilon from Methanothermobacter thermautotrophicus (strain ATCC 29096 / DSM 1053 / JCM 10044 / NBRC 100330 / Delta H) (Methanobacterium thermoautotrophicum).